Here is a 404-residue protein sequence, read N- to C-terminus: Cysteine desulfurase IscS (404 aa).

Pyridoxal 5'-phosphate-binding positions include 75-76 (AT), Asn-155, Gln-183, and 203-205 (SAH). Lys-206 bears the N6-(pyridoxal phosphate)lysine mark. Thr-243 provides a ligand contact to pyridoxal 5'-phosphate. The Cysteine persulfide intermediate role is filled by Cys-328. Cys-328 is a binding site for [2Fe-2S] cluster.

The protein belongs to the class-V pyridoxal-phosphate-dependent aminotransferase family. NifS/IscS subfamily. As to quaternary structure, homodimer. Forms a heterotetramer with IscU, interacts with other sulfur acceptors. The cofactor is pyridoxal 5'-phosphate.

The protein resides in the cytoplasm. It catalyses the reaction (sulfur carrier)-H + L-cysteine = (sulfur carrier)-SH + L-alanine. It participates in cofactor biosynthesis; iron-sulfur cluster biosynthesis. Its function is as follows. Master enzyme that delivers sulfur to a number of partners involved in Fe-S cluster assembly, tRNA modification or cofactor biosynthesis. Catalyzes the removal of elemental sulfur atoms from cysteine to produce alanine. Functions as a sulfur delivery protein for Fe-S cluster synthesis onto IscU, an Fe-S scaffold assembly protein, as well as other S acceptor proteins. This Pseudomonas fluorescens (strain Pf0-1) protein is Cysteine desulfurase IscS.